The sequence spans 151 residues: Ribosome maturation factor RimP (151 aa).

Belongs to the RimP family.

The protein resides in the cytoplasm. Required for maturation of 30S ribosomal subunits. The polypeptide is Ribosome maturation factor RimP (Shewanella putrefaciens (strain CN-32 / ATCC BAA-453)).